The chain runs to 204 residues: 3-isopropylmalate dehydratase small subunit (204 aa).

Belongs to the LeuD family. LeuD type 1 subfamily. In terms of assembly, heterodimer of LeuC and LeuD.

The enzyme catalyses (2R,3S)-3-isopropylmalate = (2S)-2-isopropylmalate. Its pathway is amino-acid biosynthesis; L-leucine biosynthesis; L-leucine from 3-methyl-2-oxobutanoate: step 2/4. In terms of biological role, catalyzes the isomerization between 2-isopropylmalate and 3-isopropylmalate, via the formation of 2-isopropylmaleate. This Vesicomyosocius okutanii subsp. Calyptogena okutanii (strain HA) protein is 3-isopropylmalate dehydratase small subunit.